The chain runs to 229 residues: Large ribosomal subunit protein uL1 (229 aa).

It belongs to the universal ribosomal protein uL1 family. In terms of assembly, part of the 50S ribosomal subunit.

Functionally, binds directly to 23S rRNA. The L1 stalk is quite mobile in the ribosome, and is involved in E site tRNA release. Protein L1 is also a translational repressor protein, it controls the translation of the L11 operon by binding to its mRNA. This is Large ribosomal subunit protein uL1 from Streptococcus uberis (strain ATCC BAA-854 / 0140J).